A 713-amino-acid chain; its full sequence is Methionine--tRNA ligase (713 aa).

The 'HIGH' region motif lies at 31-41; sequence PYANGSIHLGH. Residues Cys162, Cys165, Cys175, and Cys178 each coordinate Zn(2+). Positions 348–352 match the 'KMSKS' region motif; sequence KMSKS. Residue Lys351 participates in ATP binding. Residues 609 to 713 form the tRNA-binding domain; that stretch reads DFAKIDLRIV…DGAKAGMRVK (105 aa).

The protein belongs to the class-I aminoacyl-tRNA synthetase family. MetG type 1 subfamily. In terms of assembly, homodimer. Zn(2+) is required as a cofactor.

Its subcellular location is the cytoplasm. It catalyses the reaction tRNA(Met) + L-methionine + ATP = L-methionyl-tRNA(Met) + AMP + diphosphate. Its function is as follows. Is required not only for elongation of protein synthesis but also for the initiation of all mRNA translation through initiator tRNA(fMet) aminoacylation. This chain is Methionine--tRNA ligase, found in Colwellia psychrerythraea (strain 34H / ATCC BAA-681) (Vibrio psychroerythus).